The sequence spans 225 residues: 7-cyano-7-deazaguanine synthase (225 aa).

10–20 (LSGGIDSATAA) contacts ATP. Positions 191, 199, 202, and 205 each coordinate Zn(2+).

Belongs to the QueC family. It depends on Zn(2+) as a cofactor.

It carries out the reaction 7-carboxy-7-deazaguanine + NH4(+) + ATP = 7-cyano-7-deazaguanine + ADP + phosphate + H2O + H(+). The protein operates within purine metabolism; 7-cyano-7-deazaguanine biosynthesis. Catalyzes the ATP-dependent conversion of 7-carboxy-7-deazaguanine (CDG) to 7-cyano-7-deazaguanine (preQ(0)). This chain is 7-cyano-7-deazaguanine synthase, found in Prochlorococcus marinus (strain NATL1A).